The sequence spans 132 residues: Agouti-signaling protein (132 aa).

The first 22 residues, 1–22, serve as a signal peptide directing secretion; sequence MDVTRLLLATLLVFLCFFTAYS. Asn39 carries N-linked (GlcNAc...) asparagine glycosylation. Basic and acidic residues predominate over residues 61–79; the sequence is EISRKEAEKKRSSKKEASM. The tract at residues 61-87 is disordered; that stretch reads EISRKEAEKKRSSKKEASMKKVARPRT. 5 disulfide bridges follow: Cys93–Cys108, Cys100–Cys114, Cys107–Cys125, Cys111–Cys132, and Cys116–Cys123. The Agouti domain occupies 93 to 132; the sequence is CVATRDSCKPPAPACCDPCASCQCRFFRSACSCRVLSLNC.

It is found in the secreted. Its function is as follows. Involved in the regulation of melanogenesis. The binding of ASP to MC1R precludes alpha-MSH initiated signaling and thus blocks production of cAMP, leading to a down-regulation of eumelanogenesis (brown/black pigment) and thus increasing synthesis of pheomelanin (yellow/red pigment). This is Agouti-signaling protein (ASIP) from Macaca fascicularis (Crab-eating macaque).